The sequence spans 447 residues: N-succinylarginine dihydrolase (447 aa).

Residues 19–28 (AGLSFGNEAS), Asn-110, and 137–138 (HR) contribute to the substrate site. Glu-174 is a catalytic residue. Arg-212 lines the substrate pocket. His-248 is a catalytic residue. Substrate is bound by residues Asp-250 and Asn-359. Cys-365 acts as the Nucleophile in catalysis.

Belongs to the succinylarginine dihydrolase family. In terms of assembly, homodimer.

It catalyses the reaction N(2)-succinyl-L-arginine + 2 H2O + 2 H(+) = N(2)-succinyl-L-ornithine + 2 NH4(+) + CO2. It functions in the pathway amino-acid degradation; L-arginine degradation via AST pathway; L-glutamate and succinate from L-arginine: step 2/5. In terms of biological role, catalyzes the hydrolysis of N(2)-succinylarginine into N(2)-succinylornithine, ammonia and CO(2). The polypeptide is N-succinylarginine dihydrolase (Salmonella arizonae (strain ATCC BAA-731 / CDC346-86 / RSK2980)).